The chain runs to 217 residues: Cytidylate kinase (217 aa).

Residue 9-17 coordinates ATP; sequence GPAASGKSS.

The protein belongs to the cytidylate kinase family. Type 1 subfamily.

Its subcellular location is the cytoplasm. It catalyses the reaction CMP + ATP = CDP + ADP. The enzyme catalyses dCMP + ATP = dCDP + ADP. The protein is Cytidylate kinase of Bdellovibrio bacteriovorus (strain ATCC 15356 / DSM 50701 / NCIMB 9529 / HD100).